Here is a 977-residue protein sequence, read N- to C-terminus: Kinesin-like protein KIN-14D (977 aa).

Low complexity predominate over residues 1–13 (MSSSNNAAAAAAS). Residues 1–20 (MSSSNNAAAAAASPDPSRRR) are disordered. A Calponin-homology (CH) domain is found at 17–118 (SRRREDVVGW…CILALKDRFG (102 aa)). Residues 297 to 384 (KAEETQRIED…TKRRIELEEL (88 aa)) adopt a coiled-coil conformation. A Kinesin motor domain is found at 472–800 (NIRVYCRIRP…LKFAERVSGV (329 aa)). 556–563 (GQTGSGKT) is a binding site for ATP. Residues 812–847 (KEGKDVKELMDQLSLLKDTISKKDEEIDRLQLLNSS) adopt a coiled-coil conformation. The interval 852–977 (PTRQADSVLK…RNNSTLKRGP (126 aa)) is disordered. Polar residues-rich tracts occupy residues 861-879 (KHSS…TSVG) and 956-977 (RKSS…KRGP).

It belongs to the TRAFAC class myosin-kinesin ATPase superfamily. Kinesin family. KIN-14 subfamily.

This chain is Kinesin-like protein KIN-14D, found in Oryza sativa subsp. japonica (Rice).